The chain runs to 333 residues: 3-isopropylmalate/3-methylmalate dehydrogenase (333 aa).

Residues Arg81, Arg91, Arg112, and Asp203 each coordinate substrate. Mg(2+) is bound by residues Asp203, Asp227, and Asp231. Residue Gly260–Asn272 participates in NAD(+) binding.

Belongs to the isocitrate and isopropylmalate dehydrogenases family. In terms of assembly, homotetramer. Requires Mg(2+) as cofactor. It depends on Mn(2+) as a cofactor.

It is found in the cytoplasm. The catalysed reaction is (2R,3S)-3-isopropylmalate + NAD(+) = 4-methyl-2-oxopentanoate + CO2 + NADH. It catalyses the reaction (2R,3S)-3-methylmalate + NAD(+) = 2-oxobutanoate + CO2 + NADH. The enzyme catalyses (R)-malate + NAD(+) = pyruvate + CO2 + NADH. It functions in the pathway amino-acid biosynthesis; L-leucine biosynthesis; L-leucine from 3-methyl-2-oxobutanoate: step 3/4. The protein operates within amino-acid biosynthesis; L-isoleucine biosynthesis; 2-oxobutanoate from pyruvate: step 3/3. In terms of biological role, catalyzes the oxidation of 3-carboxy-2-hydroxy-4-methylpentanoate (3-isopropylmalate) to 3-carboxy-4-methyl-2-oxopentanoate, which decarboxylates to 4-methyl-2-oxopentanoate (2-oxoisocaproate). Also catalyzes the oxidative decarboxylation of 3-methylmalate to 2-oxobutyrate, and that of D-malate to pyruvate. Cannot use NADP(+) instead of NAD(+). Cannot catalyze the oxidation of L-malate, L-tartrate, D-tartrate, DL-isocitrate, or DL-lactate. In Methanocaldococcus jannaschii (strain ATCC 43067 / DSM 2661 / JAL-1 / JCM 10045 / NBRC 100440) (Methanococcus jannaschii), this protein is 3-isopropylmalate/3-methylmalate dehydrogenase (leuB).